Consider the following 331-residue polypeptide: Glutaminase (331 aa).

Substrate contacts are provided by Ser-77, Asn-129, Glu-173, Asn-180, Tyr-204, Tyr-256, and Val-274.

Belongs to the glutaminase family. Homotetramer.

It catalyses the reaction L-glutamine + H2O = L-glutamate + NH4(+). The protein is Glutaminase of Oceanobacillus iheyensis (strain DSM 14371 / CIP 107618 / JCM 11309 / KCTC 3954 / HTE831).